The sequence spans 80 residues: Defensin-like protein 207 (80 aa).

The signal sequence occupies residues 1–29; that stretch reads MAKNLNSVSFIVLLLVLLVASTEILKSDA. Intrachain disulfides connect C38/C64, C50/C75, and C54/C77.

Belongs to the DEFL family.

Its subcellular location is the secreted. The protein is Defensin-like protein 207 of Arabidopsis thaliana (Mouse-ear cress).